The sequence spans 210 residues: Probable nicotinate-nucleotide adenylyltransferase (210 aa).

It belongs to the NadD family.

The enzyme catalyses nicotinate beta-D-ribonucleotide + ATP + H(+) = deamido-NAD(+) + diphosphate. Its pathway is cofactor biosynthesis; NAD(+) biosynthesis; deamido-NAD(+) from nicotinate D-ribonucleotide: step 1/1. In terms of biological role, catalyzes the reversible adenylation of nicotinate mononucleotide (NaMN) to nicotinic acid adenine dinucleotide (NaAD). The sequence is that of Probable nicotinate-nucleotide adenylyltransferase from Streptococcus pyogenes serotype M1.